An 84-amino-acid polypeptide reads, in one-letter code: Putative membrane protein insertion efficiency factor (84 aa).

It belongs to the UPF0161 family.

It is found in the cell inner membrane. Could be involved in insertion of integral membrane proteins into the membrane. This is Putative membrane protein insertion efficiency factor from Shewanella halifaxensis (strain HAW-EB4).